The following is a 141-amino-acid chain: Hemoglobin subunit alpha (141 aa).

One can recognise a Globin domain in the interval 1–141 (VLSPADKSNV…VSTVLVSKYR (141 aa)). Ser3 is subject to Phosphoserine. 2 positions are modified to N6-succinyllysine: Lys7 and Lys11. An N6-acetyllysine; alternate modification is found at Lys16. Lys16 is subject to N6-succinyllysine; alternate. At Tyr24 the chain carries Phosphotyrosine. Ser35 is modified (phosphoserine). Position 40 is an N6-succinyllysine (Lys40). A Phosphoserine modification is found at Ser49. Residue His58 coordinates O2. Heme b is bound at residue His87. Ser102 is subject to Phosphoserine. Thr108 is subject to Phosphothreonine. Ser124 carries the post-translational modification Phosphoserine. Thr134 is modified (phosphothreonine). Ser138 carries the phosphoserine modification.

This sequence belongs to the globin family. As to quaternary structure, heterotetramer of two alpha chains and two beta chains. In terms of tissue distribution, red blood cells.

Involved in oxygen transport from the lung to the various peripheral tissues. Its function is as follows. Hemopressin acts as an antagonist peptide of the cannabinoid receptor CNR1. Hemopressin-binding efficiently blocks cannabinoid receptor CNR1 and subsequent signaling. The protein is Hemoglobin subunit alpha (HBA) of Chalinolobus morio (Chocolate-wattled bat).